The chain runs to 189 residues: Orotate phosphoribosyltransferase (189 aa).

5-phospho-alpha-D-ribose 1-diphosphate contacts are provided by residues arginine 99, lysine 100, lysine 103, histidine 105, and glutamate 126 to serine 134. Residues threonine 130 and arginine 158 each contribute to the orotate site.

The protein belongs to the purine/pyrimidine phosphoribosyltransferase family. PyrE subfamily. In terms of assembly, homodimer. The cofactor is Mg(2+).

The enzyme catalyses orotidine 5'-phosphate + diphosphate = orotate + 5-phospho-alpha-D-ribose 1-diphosphate. The protein operates within pyrimidine metabolism; UMP biosynthesis via de novo pathway; UMP from orotate: step 1/2. Functionally, catalyzes the transfer of a ribosyl phosphate group from 5-phosphoribose 1-diphosphate to orotate, leading to the formation of orotidine monophosphate (OMP). This chain is Orotate phosphoribosyltransferase, found in Thermosynechococcus vestitus (strain NIES-2133 / IAM M-273 / BP-1).